The primary structure comprises 875 residues: Serine/threonine-protein kinase D2 (875 aa).

The span at 1-12 (MAAAPSHPAGLP) shows a compositional bias: low complexity. The tract at residues 1–35 (MAAAPSHPAGLPGSPGPGSPPPPGGLDLQSPPPLL) is disordered. The span at 14–35 (SPGPGSPPPPGGLDLQSPPPLL) shows a compositional bias: pro residues. Ser30 bears the Phosphoserine mark. Tyr87 is modified (phosphotyrosine). A Phorbol-ester/DAG-type 1 zinc finger spans residues 138–188 (PHALTVHSYRAPAFCDHCGEMLFGLVRQGLKCDGCGLNYHKRCAFSIPNNC). 8 positions are modified to phosphoserine: Ser197, Ser198, Ser200, Ser203, Ser206, Ser211, Ser212, and Ser214. Residues 224-247 (RSTTDLLPRRPPSSSSSSSSSSFY) form a disordered region. Low complexity predominate over residues 236 to 245 (SSSSSSSSSS). The residue at position 244 (Ser244) is a Phosphoserine; by CSNK1D and CSNK1E. Ser245 bears the Phosphoserine mark. The Phorbol-ester/DAG-type 2 zinc-finger motif lies at 265 to 315 (PHTFLIHSYTRPTVCQACKKLLKGLFRQGLQCKDCKFNCHKRCATRVPNDC). A disordered region spans residues 332–374 (DYSEADKSSISDELEDSGVIPGSHSESALHASEEEEGEGHKAQ). Positions 398–510 (TTLREGWVVH…WETAIRQALM (113 aa)) constitute a PH domain. Phosphotyrosine is present on Tyr408. Tyr439 is modified (phosphotyrosine; by ABL1). Ser519 carries the post-translational modification Phosphoserine. In terms of domain architecture, Protein kinase spans 552 to 808 (IFPDEVLGSG…VDKSLSHPWL (257 aa)). ATP is bound by residues 558 to 566 (LGSGQFGVV) and Lys581. Catalysis depends on Asp675, which acts as the Proton acceptor. Ser707 is subject to Phosphoserine; by PKC. The residue at position 711 (Ser711) is a Phosphoserine; by autocatalysis. A Phosphotyrosine; by ABL1 modification is found at Tyr718. Residues 725–727 (LNQ) carry the Important for ABL1-mediated Tyr-718 phosphorylation motif. At Ser873 the chain carries Phosphoserine; by autocatalysis.

The protein belongs to the protein kinase superfamily. CAMK Ser/Thr protein kinase family. PKD subfamily. As to quaternary structure, interacts (via C-terminus) with LCK. Interacts (via N-terminus and zing-finger domain 1 and 2) with PRKCD in response to oxidative stress; the interaction is independent of PRKD2 tyrosine phosphorylation. The cofactor is Mg(2+). In terms of processing, phosphorylation of Ser-873 correlates with the activation status of the kinase. Ser-707 is probably phosphorylated by PKC. Phosphorylation at Ser-244 by CSNK1D and CSNK1E promotes nuclear localization and substrate targeting. Phosphorylation at Ser-244, Ser-707 and Ser-711 is required for nuclear localization. Phosphorylated at Tyr-438 by ABL1 in response to oxidative stress. Phosphorylated at Tyr-718 by ABL1 specifically in response to oxidative stress; requires prior phosphorylation at Ser-707 or/and Ser-711.

Its subcellular location is the cytoplasm. It is found in the cell membrane. The protein resides in the golgi apparatus. The protein localises to the trans-Golgi network. It catalyses the reaction L-seryl-[protein] + ATP = O-phospho-L-seryl-[protein] + ADP + H(+). The catalysed reaction is L-threonyl-[protein] + ATP = O-phospho-L-threonyl-[protein] + ADP + H(+). With respect to regulation, activated by DAG and phorbol esters. Phorbol-ester/DAG-type domains bind DAG, mediating translocation to membranes. Autophosphorylation of Ser-711 and phosphorylation of Ser-707 by PKC relieves auto-inhibition by the PH domain. Catalytic activity is further increased by phosphorylation at Tyr-718 in response to oxidative stress. In terms of biological role, serine/threonine-protein kinase that converts transient diacylglycerol (DAG) signals into prolonged physiological effects downstream of PKC, and is involved in the regulation of cell proliferation via MAPK1/3 (ERK1/2) signaling, oxidative stress-induced NF-kappa-B activation, inhibition of HDAC7 transcriptional repression, signaling downstream of T-cell antigen receptor (TCR) and cytokine production, and plays a role in Golgi membrane trafficking, angiogenesis, secretory granule release and cell adhesion. May potentiate mitogenesis induced by the neuropeptide bombesin by mediating an increase in the duration of MAPK1/3 (ERK1/2) signaling, which leads to accumulation of immediate-early gene products including FOS that stimulate cell cycle progression. In response to oxidative stress, is phosphorylated at Tyr-438 and Tyr-718 by ABL1, which leads to the activation of PRKD2 without increasing its catalytic activity, and mediates activation of NF-kappa-B. In response to the activation of the gastrin receptor CCKBR, is phosphorylated at Ser-244 by CSNK1D and CSNK1E, translocates to the nucleus, phosphorylates HDAC7, leading to nuclear export of HDAC7 and inhibition of HDAC7 transcriptional repression of NR4A1/NUR77. Upon TCR stimulation, is activated independently of ZAP70, translocates from the cytoplasm to the nucleus and is required for interleukin-2 (IL2) promoter up-regulation. During adaptive immune responses, is required in peripheral T-lymphocytes for the production of the effector cytokines IL2 and IFNG after TCR engagement and for optimal induction of antibody responses to antigens. In epithelial cells stimulated with lysophosphatidic acid (LPA), is activated through a PKC-dependent pathway and mediates LPA-stimulated interleukin-8 (IL8) secretion via a NF-kappa-B-dependent pathway. During TCR-induced T-cell activation, interacts with and is activated by the tyrosine kinase LCK, which results in the activation of the NFAT transcription factors. In the trans-Golgi network (TGN), regulates the fission of transport vesicles that are on their way to the plasma membrane and in polarized cells is involved in the transport of proteins from the TGN to the basolateral membrane. Plays an important role in endothelial cell proliferation and migration prior to angiogenesis, partly through modulation of the expression of KDR/VEGFR2 and FGFR1, two key growth factor receptors involved in angiogenesis. In secretory pathway, is required for the release of chromogranin-A (CHGA)-containing secretory granules from the TGN. Downstream of PRKCA, plays important roles in angiotensin-2-induced monocyte adhesion to endothelial cells. The polypeptide is Serine/threonine-protein kinase D2 (Prkd2) (Mus musculus (Mouse)).